We begin with the raw amino-acid sequence, 305 residues long: MLKQRTLKTVIRASGVGLHGGVKVNMTLRPAAPDTGIVFRRVDLPEPVDIPAKAFMVGDTRMCSCLEKDGVKVGTIEHLMSALAGLGIDNVWVDLDAPEVPILDGSAAPFVFLIQSAGIEEQNAAKKFIRVTKTIEVRDGDKWARFEPYDGYRLAFSIVFNHPAIDKSAQKAEIDFAEQSYVREVARARTFGFMQEVEYLRENGLALGGGLENAIVLDEFRVLNQDGLRYGDEFVKHKILDAIGDLYLLGHPLLAAYSSHKGGHALNNQLARALLEQQSSWEIATFEQAEHAPSGVTRWLAQAAA.

Residues His78, His237, and Asp241 each contribute to the Zn(2+) site. His264 serves as the catalytic Proton donor.

This sequence belongs to the LpxC family. Requires Zn(2+) as cofactor.

The enzyme catalyses a UDP-3-O-[(3R)-3-hydroxyacyl]-N-acetyl-alpha-D-glucosamine + H2O = a UDP-3-O-[(3R)-3-hydroxyacyl]-alpha-D-glucosamine + acetate. The protein operates within glycolipid biosynthesis; lipid IV(A) biosynthesis; lipid IV(A) from (3R)-3-hydroxytetradecanoyl-[acyl-carrier-protein] and UDP-N-acetyl-alpha-D-glucosamine: step 2/6. Catalyzes the hydrolysis of UDP-3-O-myristoyl-N-acetylglucosamine to form UDP-3-O-myristoylglucosamine and acetate, the committed step in lipid A biosynthesis. The sequence is that of UDP-3-O-acyl-N-acetylglucosamine deacetylase from Dechloromonas aromatica (strain RCB).